The sequence spans 299 residues: Zinc finger protein 414 (299 aa).

Composition is skewed to polar residues over residues Met-1 to Gly-20 and Asp-69 to Gly-81. The tract at residues Met-1–Gln-98 is disordered. 2 consecutive C2H2-type zinc fingers follow at residues Ile-99 to His-123 and Phe-135 to His-159. The C2H2-type 3; degenerate zinc-finger motif lies at Phe-166–Asp-190. 2 disordered regions span residues Gln-193–Leu-228 and Pro-254–Arg-299. The span at Leu-203–Glu-215 shows a compositional bias: basic and acidic residues. Low complexity predominate over residues Asp-217–Leu-228.

Belongs to the krueppel C2H2-type zinc-finger protein family.

Its subcellular location is the nucleus. In terms of biological role, may be involved in transcriptional regulation. The chain is Zinc finger protein 414 (Znf414) from Mus musculus (Mouse).